The chain runs to 469 residues: Properdin (469 aa).

The first 27 residues, 1–27, serve as a signal peptide directing secretion; that stretch reads MITEGAQAPRLLLPPLLLLLTLPATGS. 7 TSP type-1 domains span residues 28–76, 77–134, 136–191, 193–255, 257–313, 315–377, and 379–462; these read DPVL…QPCR, SPRW…QCCP, MGGW…QSCP, HGAW…PPCP, AGSW…VPCP, DGEW…QHCP, and KGSW…PACK. 3 disulfide bridges follow: Cys-32/Cys-56, Cys-43/Cys-72, and Cys-57/Cys-75. 2 C-linked (Man) tryptophan glycosylation sites follow: Trp-83 and Trp-86. Intrachain disulfides connect Cys-89–Cys-127, Cys-93–Cys-133, Cys-104–Cys-111, Cys-132–Cys-170, Cys-148–Cys-184, Cys-152–Cys-190, and Cys-163–Cys-174. 3 C-linked (Man) tryptophan glycosylation sites follow: Trp-139, Trp-142, and Trp-145. O-linked (Fuc...) threonine glycosylation is present at Thr-151. C-linked (Man) tryptophan glycans are attached at residues Trp-196, Trp-199, and Trp-202. 3 disulfides stabilise this stretch: Cys-205–Cys-248, Cys-209–Cys-254, and Cys-224–Cys-238. The O-linked (Fuc...) serine glycan is linked to Ser-208. A disordered region spans residues 218–238; that stretch reads ETRSRKCSAPEPSQKPPGKPC. Trp-260 and Trp-263 each carry a C-linked (Man) tryptophan glycan. Cystine bridges form between Cys-269/Cys-306, Cys-273/Cys-312, and Cys-284/Cys-296. Thr-272 is a glycosylation site (O-linked (Fuc...) threonine). 2 C-linked (Man) tryptophan glycosylation sites follow: Trp-321 and Trp-324. 3 cysteine pairs are disulfide-bonded: Cys-327-Cys-370, Cys-337-Cys-376, and Cys-350-Cys-360. The tract at residues 351-359 is interaction with Complement C3 beta chain; that stretch reads KGRKFDGHR. Residues Trp-382, Trp-385, and Trp-388 are each glycosylated (C-linked (Man) tryptophan). 3 disulfides stabilise this stretch: Cys-391/Cys-455, Cys-395/Cys-461, and Cys-407/Cys-439. Residue Asn-428 is glycosylated (N-linked (GlcNAc...) asparagine).

As to quaternary structure, in plasma, properdin exists as dimers, trimers or tetramers in the relative proportions of 26:54:20. Interacts with the pro-C3-convertase enzyme complex (C3b-Bb) comprised of Complement C3 beta chain (C3b) and the Complement factor B Bb fragment (Bb), where it binds (via its TSP type-1 5 domain) with C3b and Bb. This interaction stabilizes the complex and allows it to become the active C3-convertase enzyme complex (C3b-Bb-FP). Interacts with C3b. Interacts with CFB.

Its subcellular location is the secreted. Its function is as follows. A positive regulator of the alternate pathway of complement. It binds to and stabilizes the C3- and C5-convertase enzyme complexes. Inhibits CFI-CFH mediated degradation of Inhibits CFI-CFH mediated degradation of Complement C3 beta chain (C3b). This is Properdin (CFP) from Pongo abelii (Sumatran orangutan).